Here is a 530-residue protein sequence, read N- to C-terminus: CTP synthase (530 aa).

The interval 1–264 (MPKLIIVTGG…GDFLTRRLRL (264 aa)) is amidoligase domain. CTP is bound at residue Ser-13. Ser-13 is a binding site for UTP. 14–19 (GVGKGV) is an ATP binding site. Position 54 (Tyr-54) interacts with L-glutamine. Residue Asp-71 coordinates ATP. Mg(2+) contacts are provided by Asp-71 and Glu-139. CTP contacts are provided by residues 146–148 (DYE), 185–190 (KTKPLQ), and Lys-221. UTP is bound by residues 185–190 (KTKPLQ) and Lys-221. The 242-residue stretch at 289–530 (SVGMCGKYVE…LLKAALFAKR (242 aa)) folds into the Glutamine amidotransferase type-1 domain. Gly-351 is a binding site for L-glutamine. The active-site Nucleophile; for glutamine hydrolysis is Cys-378. L-glutamine contacts are provided by residues 379–382 (FGMQ), Glu-402, and Arg-459. Catalysis depends on residues His-504 and Glu-506.

The protein belongs to the CTP synthase family. In terms of assembly, homotetramer.

It carries out the reaction UTP + L-glutamine + ATP + H2O = CTP + L-glutamate + ADP + phosphate + 2 H(+). The catalysed reaction is L-glutamine + H2O = L-glutamate + NH4(+). It catalyses the reaction UTP + NH4(+) + ATP = CTP + ADP + phosphate + 2 H(+). It participates in pyrimidine metabolism; CTP biosynthesis via de novo pathway; CTP from UDP: step 2/2. Allosterically activated by GTP, when glutamine is the substrate; GTP has no effect on the reaction when ammonia is the substrate. The allosteric effector GTP functions by stabilizing the protein conformation that binds the tetrahedral intermediate(s) formed during glutamine hydrolysis. Inhibited by the product CTP, via allosteric rather than competitive inhibition. Functionally, catalyzes the ATP-dependent amination of UTP to CTP with either L-glutamine or ammonia as the source of nitrogen. Regulates intracellular CTP levels through interactions with the four ribonucleotide triphosphates. The sequence is that of CTP synthase from Pyrobaculum aerophilum (strain ATCC 51768 / DSM 7523 / JCM 9630 / CIP 104966 / NBRC 100827 / IM2).